A 200-amino-acid chain; its full sequence is NADH-quinone oxidoreductase subunit C (200 aa).

Belongs to the complex I 30 kDa subunit family. As to quaternary structure, NDH-1 is composed of 14 different subunits. Subunits NuoB, C, D, E, F, and G constitute the peripheral sector of the complex.

It is found in the cell inner membrane. It catalyses the reaction a quinone + NADH + 5 H(+)(in) = a quinol + NAD(+) + 4 H(+)(out). NDH-1 shuttles electrons from NADH, via FMN and iron-sulfur (Fe-S) centers, to quinones in the respiratory chain. The immediate electron acceptor for the enzyme in this species is believed to be ubiquinone. Couples the redox reaction to proton translocation (for every two electrons transferred, four hydrogen ions are translocated across the cytoplasmic membrane), and thus conserves the redox energy in a proton gradient. The sequence is that of NADH-quinone oxidoreductase subunit C from Paraburkholderia xenovorans (strain LB400).